The sequence spans 276 residues: Bis(5'-nucleosyl)-tetraphosphatase, symmetrical (276 aa).

Belongs to the Ap4A hydrolase family.

It carries out the reaction P(1),P(4)-bis(5'-adenosyl) tetraphosphate + H2O = 2 ADP + 2 H(+). Its function is as follows. Hydrolyzes diadenosine 5',5'''-P1,P4-tetraphosphate to yield ADP. The sequence is that of Bis(5'-nucleosyl)-tetraphosphatase, symmetrical from Mannheimia succiniciproducens (strain KCTC 0769BP / MBEL55E).